Consider the following 442-residue polypeptide: Chromosomal replication initiator protein DnaA (442 aa).

The interval 1-75 (MDAWPRCLER…GNGEVALAVG (75 aa)) is domain I, interacts with DnaA modulators. A domain II region spans residues 75–104 (GSRPRAPEPLPAPQAVASAPAAAPIVPFAG). The domain III, AAA+ region stretch occupies residues 105–322 (NLDSHYTFAN…GALNTLVARA (218 aa)). Positions 150, 152, 153, and 154 each coordinate ATP. The segment at 323-442 (NFTGRSITVE…WEKLIRKLSE (120 aa)) is domain IV, binds dsDNA.

This sequence belongs to the DnaA family. In terms of assembly, oligomerizes as a right-handed, spiral filament on DNA at oriC.

It localises to the cytoplasm. Its function is as follows. Plays an essential role in the initiation and regulation of chromosomal replication. ATP-DnaA binds to the origin of replication (oriC) to initiate formation of the DNA replication initiation complex once per cell cycle. Binds the DnaA box (a 9 base pair repeat at the origin) and separates the double-stranded (ds)DNA. Forms a right-handed helical filament on oriC DNA; dsDNA binds to the exterior of the filament while single-stranded (ss)DNA is stabiized in the filament's interior. The ATP-DnaA-oriC complex binds and stabilizes one strand of the AT-rich DNA unwinding element (DUE), permitting loading of DNA polymerase. After initiation quickly degrades to an ADP-DnaA complex that is not apt for DNA replication. Binds acidic phospholipids. This chain is Chromosomal replication initiator protein DnaA, found in Xanthomonas campestris pv. campestris (strain 8004).